Consider the following 199-residue polypeptide: Pyridoxine/pyridoxamine 5'-phosphate oxidase (199 aa).

FMN contacts are provided by residues 44 to 49 (RTVLLK), 59 to 60 (YS), Lys66, and Gln91. Lys49 serves as a coordination point for substrate. Substrate is bound by residues Tyr109, Arg113, and Ser117. FMN is bound by residues 126–127 (QS) and Trp171. 177–179 (RLH) is a binding site for substrate. Arg181 contacts FMN.

Belongs to the pyridoxamine 5'-phosphate oxidase family. In terms of assembly, homodimer. Requires FMN as cofactor.

It catalyses the reaction pyridoxamine 5'-phosphate + O2 + H2O = pyridoxal 5'-phosphate + H2O2 + NH4(+). It carries out the reaction pyridoxine 5'-phosphate + O2 = pyridoxal 5'-phosphate + H2O2. Its pathway is cofactor metabolism; pyridoxal 5'-phosphate salvage; pyridoxal 5'-phosphate from pyridoxamine 5'-phosphate: step 1/1. The protein operates within cofactor metabolism; pyridoxal 5'-phosphate salvage; pyridoxal 5'-phosphate from pyridoxine 5'-phosphate: step 1/1. Catalyzes the oxidation of either pyridoxine 5'-phosphate (PNP) or pyridoxamine 5'-phosphate (PMP) into pyridoxal 5'-phosphate (PLP). This chain is Pyridoxine/pyridoxamine 5'-phosphate oxidase, found in Xanthomonas oryzae pv. oryzae (strain KACC10331 / KXO85).